Consider the following 120-residue polypeptide: uncharacterized protein (120 aa).

This is an uncharacterized protein from Escherichia coli O6:H1 (strain CFT073 / ATCC 700928 / UPEC).